Consider the following 347-residue polypeptide: Dual specificity mitogen-activated protein kinase kinase mek-1 (347 aa).

Residues 1–42 are disordered; that stretch reads MERDFDLGMGRPGGLGGLGGEPIMQQMPQPAPHHPSRSSNDH. The span at 10 to 20 shows a compositional bias: gly residues; that stretch reads GRPGGLGGLGG. Residues 72–325 form the Protein kinase domain; it reads LQFVEDIGHG…YDMLLQHPFV (254 aa). ATP-binding positions include 78–86 and Lys99; that span reads IGHGSCGTV. The Proton acceptor role is filled by Asp193. 2 positions are modified to phosphoserine: Ser221 and Ser225.

This sequence belongs to the protein kinase superfamily. STE Ser/Thr protein kinase family. MAP kinase kinase subfamily. In terms of assembly, interacts with shc-1; the interaction is independent of mek-1 catalytic activity, is constitutive and may facilitate mlk-1-mediated phosphorylation by bringing mlk-1 and mek-1 together. The cofactor is Mg(2+). In terms of processing, may be phosphorylated at Ser-221 and/or Ser-225 by mlk-1. In terms of tissue distribution, expressed in pharyngeal muscles, uterine endothelial cells, intestine and in neurons of ring ganglia, ventral ganglion and ganglia around anus. Expressed also in hypodermis and body muscles.

It carries out the reaction L-seryl-[protein] + ATP = O-phospho-L-seryl-[protein] + ADP + H(+). The catalysed reaction is L-threonyl-[protein] + ATP = O-phospho-L-threonyl-[protein] + ADP + H(+). It catalyses the reaction L-tyrosyl-[protein] + ATP = O-phospho-L-tyrosyl-[protein] + ADP + H(+). Its activity is regulated as follows. May be activated by phosphorylation at Ser-221 and Ser-225. Functionally, dual specificity protein kinase which may phosphorylate kgb-1 and thereby is an essential component of the JNK pathway composed of mlk-1, mek-1 and kgb-1. May also have a synergistic role with sek-1 in phosphorylating pmk-1. Involved in the response to environmental stress including heavy metal ions (Cu(2+) and Cd(2+)), oxidative stress and starvation. In association with sek-1, regulates germline cell apoptosis in response to oxidative, osmotic and heat shock stresses. Involved in resistance to pathogenic bacteria infection. Involved in axon regeneration after injury. This is Dual specificity mitogen-activated protein kinase kinase mek-1 from Caenorhabditis elegans.